A 543-amino-acid chain; its full sequence is Probable protein kinase UbiB (543 aa).

Residues 123-501 (DFDQQALASA…RVRQGQSRYL (379 aa)) enclose the Protein kinase domain. Residues 129 to 137 (LASASIAQV) and Lys152 contribute to the ATP site. Asp287 (proton acceptor) is an active-site residue. Helical transmembrane passes span 498–518 (SRYL…LLSG) and 519–539 (DVEV…VIGW).

This sequence belongs to the ABC1 family. UbiB subfamily.

It localises to the cell inner membrane. Its pathway is cofactor biosynthesis; ubiquinone biosynthesis [regulation]. Its function is as follows. Is probably a protein kinase regulator of UbiI activity which is involved in aerobic coenzyme Q (ubiquinone) biosynthesis. The polypeptide is Probable protein kinase UbiB (Serratia proteamaculans (strain 568)).